Consider the following 511-residue polypeptide: GATA zinc finger domain-containing protein 15 (511 aa).

Over residues Thr-1 to Asn-111 the composition is skewed to low complexity. Disordered stretches follow at residues Thr-1–Phe-194, Asn-214–Lys-313, and Asn-325–Pro-355. Polar residues predominate over residues Ser-124–Pro-135. Residues Asn-136–Gln-166 show a composition bias toward low complexity. Residues Lys-167 to His-185 show a composition bias toward polar residues. Low complexity-rich tracts occupy residues Asn-214–Asn-309 and Ser-337–Pro-351. Residues Cys-453–Cys-478 form a GATA-type zinc finger.

This Dictyostelium discoideum (Social amoeba) protein is GATA zinc finger domain-containing protein 15 (gtaO).